The following is a 216-amino-acid chain: Adenylate kinase (216 aa).

10–15 (GAGKGT) provides a ligand contact to ATP. The tract at residues 30-59 (STGDIFRAAIKNQTPMGVEAKKFIDKGELV) is NMP. Residues Thr31, Arg36, 57–59 (ELV), 85–88 (GFPR), and Gln92 contribute to the AMP site. Positions 126–164 (GRFICRNCGTTYHRLYNPTKVEGTCDVCGGHDFYQRDDD) are LID. ATP is bound at residue Arg127. Zn(2+) contacts are provided by Cys130 and Cys133. Position 136-137 (136-137 (TY)) interacts with ATP. Zn(2+) contacts are provided by Cys150 and Cys153. Residues Arg161 and Arg172 each coordinate AMP. Residue Gln200 coordinates ATP.

It belongs to the adenylate kinase family. Monomer.

The protein localises to the cytoplasm. The enzyme catalyses AMP + ATP = 2 ADP. It participates in purine metabolism; AMP biosynthesis via salvage pathway; AMP from ADP: step 1/1. Functionally, catalyzes the reversible transfer of the terminal phosphate group between ATP and AMP. Plays an important role in cellular energy homeostasis and in adenine nucleotide metabolism. The sequence is that of Adenylate kinase from Limosilactobacillus fermentum (strain NBRC 3956 / LMG 18251) (Lactobacillus fermentum).